Reading from the N-terminus, the 604-residue chain is Glutamyl-tRNA(Gln) amidotransferase subunit B, mitochondrial (604 aa).

The N-terminal 48 residues, methionine 1–serine 48, are a transit peptide targeting the mitochondrion. A disordered region spans residues phenylalanine 28 to arginine 57. Over residues serine 33–arginine 46 the composition is skewed to polar residues.

This sequence belongs to the GatB/GatE family. GatB subfamily. In terms of assembly, subunit of the heterotrimeric GatCAB amidotransferase (AdT) complex, composed of A, B and C subunits.

The protein localises to the mitochondrion. It catalyses the reaction L-glutamyl-tRNA(Gln) + L-glutamine + ATP + H2O = L-glutaminyl-tRNA(Gln) + L-glutamate + ADP + phosphate + H(+). Functionally, allows the formation of correctly charged Gln-tRNA(Gln) through the transamidation of misacylated Glu-tRNA(Gln) in the mitochondria. The reaction takes place in the presence of glutamine and ATP through an activated gamma-phospho-Glu-tRNA(Gln). The protein is Glutamyl-tRNA(Gln) amidotransferase subunit B, mitochondrial of Ajellomyces dermatitidis (strain ER-3 / ATCC MYA-2586) (Blastomyces dermatitidis).